We begin with the raw amino-acid sequence, 226 residues long: MKIAVIVFPGSNCDIDLYEALKTVCGADVDYVDHQQTSLAGYDAVMLPGGFSYGDYLRAGAIARFAKIMPEVKRLADEGKPVFGTCNGFQILTEAGLLPGALKKNDSQNFVCKTTPLEVVNNQTIFTSQYQEHERINLPIAHADGSYFADQATLDELEANHQVVFRYAEENPNGSLNNIAGICNRAGNVLGMMPHPERAVEAILGNTDGLRVFKSLLENGTVIAEG.

The region spanning 2–226 (KIAVIVFPGS…LENGTVIAEG (225 aa)) is the Glutamine amidotransferase type-1 domain. Cys-86 functions as the Nucleophile in the catalytic mechanism. Catalysis depends on residues His-195 and Glu-197.

In terms of assembly, part of the FGAM synthase complex composed of 1 PurL, 1 PurQ and 2 PurS subunits.

The protein localises to the cytoplasm. It catalyses the reaction N(2)-formyl-N(1)-(5-phospho-beta-D-ribosyl)glycinamide + L-glutamine + ATP + H2O = 2-formamido-N(1)-(5-O-phospho-beta-D-ribosyl)acetamidine + L-glutamate + ADP + phosphate + H(+). The enzyme catalyses L-glutamine + H2O = L-glutamate + NH4(+). It functions in the pathway purine metabolism; IMP biosynthesis via de novo pathway; 5-amino-1-(5-phospho-D-ribosyl)imidazole from N(2)-formyl-N(1)-(5-phospho-D-ribosyl)glycinamide: step 1/2. In terms of biological role, part of the phosphoribosylformylglycinamidine synthase complex involved in the purines biosynthetic pathway. Catalyzes the ATP-dependent conversion of formylglycinamide ribonucleotide (FGAR) and glutamine to yield formylglycinamidine ribonucleotide (FGAM) and glutamate. The FGAM synthase complex is composed of three subunits. PurQ produces an ammonia molecule by converting glutamine to glutamate. PurL transfers the ammonia molecule to FGAR to form FGAM in an ATP-dependent manner. PurS interacts with PurQ and PurL and is thought to assist in the transfer of the ammonia molecule from PurQ to PurL. This is Phosphoribosylformylglycinamidine synthase subunit PurQ from Limosilactobacillus fermentum (strain NBRC 3956 / LMG 18251) (Lactobacillus fermentum).